Consider the following 198-residue polypeptide: MLYPTPIAKLIDSFSKLPGIGAKTATRLAFYTISMSDEDVNDFAKNLLAAKRELTYCSVCGRLTDDDPCIICTDETRDRTKILVVEDSKDVSAMEKIQEYRGLYHVLQGLISPMNGVGPDDINLKSLITRLMDSEVDEVIIATNATADGEATSMYISRVLKPAGIKVTRLARGLAVGSDIEYADEVTLLRAIENRTEL.

Residues 57–72 form a C4-type zinc finger; that stretch reads CSVCGRLTDDDPCIIC. In terms of domain architecture, Toprim spans 80 to 175; sequence TKILVVEDSK…KVTRLARGLA (96 aa).

It belongs to the RecR family.

Its function is as follows. May play a role in DNA repair. It seems to be involved in an RecBC-independent recombinational process of DNA repair. It may act with RecF and RecO. The sequence is that of Recombination protein RecR from Streptococcus thermophilus (strain CNRZ 1066).